We begin with the raw amino-acid sequence, 255 residues long: Small ribosomal subunit protein uS2 (255 aa).

The disordered stretch occupies residues 230–255 (QSSSGRDLGASSEVPVEPALEEAAEG).

It belongs to the universal ribosomal protein uS2 family.

The sequence is that of Small ribosomal subunit protein uS2 from Rhizobium leguminosarum bv. trifolii (strain WSM2304).